A 647-amino-acid polypeptide reads, in one-letter code: Macrolide export ATP-binding/permease protein MacB (647 aa).

One can recognise an ABC transporter domain in the interval 6-244; that stretch reads LEISGCYRTF…VDTAVTKINN (239 aa). 42–49 serves as a coordination point for ATP; the sequence is GASGSGKS. Helical transmembrane passes span 273 to 293, 522 to 542, 577 to 597, and 612 to 632; these read FLTM…VALG, LLIS…VMNI, LVCL…GVVF, and SIVA…FLPA.

Belongs to the ABC transporter superfamily. Macrolide exporter (TC 3.A.1.122) family. In terms of assembly, homodimer. Part of the tripartite efflux system MacAB-TolC, which is composed of an inner membrane transporter, MacB, a periplasmic membrane fusion protein, MacA, and an outer membrane component, TolC. The complex forms a large protein conduit and can translocate molecules across both the inner and outer membranes. Interacts with MacA.

Its subcellular location is the cell inner membrane. Its function is as follows. Part of the tripartite efflux system MacAB-TolC. MacB is a non-canonical ABC transporter that contains transmembrane domains (TMD), which form a pore in the inner membrane, and an ATP-binding domain (NBD), which is responsible for energy generation. Confers resistance against macrolides. In Shewanella sp. (strain W3-18-1), this protein is Macrolide export ATP-binding/permease protein MacB.